We begin with the raw amino-acid sequence, 177 residues long: NADH-quinone oxidoreductase subunit B (177 aa).

[4Fe-4S] cluster is bound by residues C53, C54, C118, and C148.

It belongs to the complex I 20 kDa subunit family. As to quaternary structure, NDH-1 is composed of 14 different subunits. Subunits NuoB, C, D, E, F, and G constitute the peripheral sector of the complex. It depends on [4Fe-4S] cluster as a cofactor.

The protein localises to the cell membrane. It catalyses the reaction a quinone + NADH + 5 H(+)(in) = a quinol + NAD(+) + 4 H(+)(out). Functionally, NDH-1 shuttles electrons from NADH, via FMN and iron-sulfur (Fe-S) centers, to quinones in the respiratory chain. The immediate electron acceptor for the enzyme in this species is believed to be a menaquinone. Couples the redox reaction to proton translocation (for every two electrons transferred, four hydrogen ions are translocated across the cytoplasmic membrane), and thus conserves the redox energy in a proton gradient. The polypeptide is NADH-quinone oxidoreductase subunit B (Anoxybacillus flavithermus (strain DSM 21510 / WK1)).